The chain runs to 246 residues: Caffeoyl-CoA O-methyltransferase 1 (246 aa).

A substrate-binding site is contributed by lysine 21. S-adenosyl-L-methionine contacts are provided by residues threonine 63, glutamate 85, 87-88 (GV), serine 93, aspartate 111, and alanine 140. Residue aspartate 162 coordinates substrate. Aspartate 162 provides a ligand contact to a divalent metal cation. Aspartate 164 contacts S-adenosyl-L-methionine. Residues aspartate 188 and asparagine 189 each coordinate a divalent metal cation. Position 193 (asparagine 193) interacts with substrate.

The protein belongs to the class I-like SAM-binding methyltransferase superfamily. Cation-dependent O-methyltransferase family. CCoAMT subfamily. It depends on a divalent metal cation as a cofactor.

It catalyses the reaction (E)-caffeoyl-CoA + S-adenosyl-L-methionine = (E)-feruloyl-CoA + S-adenosyl-L-homocysteine + H(+). It participates in aromatic compound metabolism; phenylpropanoid biosynthesis. Functionally, methylates caffeoyl-CoA to feruloyl-CoA and 5-hydroxyferuloyl-CoA to sinapoyl-CoA. Plays a role in the synthesis of feruloylated polysaccharides. Involved in the reinforcement of the plant cell wall. Also involved in the responding to wounding or pathogen challenge by the increased formation of cell wall-bound ferulic acid polymers. The protein is Caffeoyl-CoA O-methyltransferase 1 (CCOMT) of Eucalyptus globulus (Tasmanian blue gum).